Here is a 309-residue protein sequence, read N- to C-terminus: Lactamase-like protein aptB (309 aa).

Zn(2+) is bound by residues His97, His99, Asp101, and His102. Residue Asp101 is the Proton donor/acceptor of the active site.

Belongs to the metallo-beta-lactamase superfamily. Zn(2+) serves as cofactor.

It carries out the reaction 2,3,6,8,9-pentahydroxy-1-oxo-3-(2-oxopropyl)-1,2,3,4-tetrahydroanthracene-2-carboxyl-[ACP] + H2O = 2,3,6,8,9-pentahydroxy-1-oxo-3-(2-oxopropyl)-1,2,3,4-tetrahydroanthracene-2-carboxylate + holo-[ACP] + H(+). Its pathway is secondary metabolite biosynthesis. In terms of biological role, lactamase-like protein; part of the gene cluster that mediates the biosynthesis of asperthecin, an anthraquinone pigment. Polyketide synthase (PKS) aptA catalyzes the formation of the aromatic polyketide from acetyl coenzyme A and seven malonyl coenzyme A molecules. Polyketide is subsequently hydrolyzed by the action of aptB into endocrocin-9-anthrone. Endocrocin-9-anthrone is then oxidized into endocrocin by aptC. Endocrocin is likely to decarboxylate spontaneously to form emodin which explains why there is no decarboxylase in the asperthecin biosynthesis cluster. Finally, aptC or another endogenous oxygenase catalyzes additional oxidation steps to form asperthecin. The sequence is that of Lactamase-like protein aptB from Emericella nidulans (strain FGSC A4 / ATCC 38163 / CBS 112.46 / NRRL 194 / M139) (Aspergillus nidulans).